The chain runs to 165 residues: Nicotine 6-hydroxylase small subunit (165 aa).

The 2Fe-2S ferredoxin-type domain maps to 10 to 86 (VEIDVEVNGR…GRSIRTVEDL (77 aa)). Residues Cys48, Cys53, Cys56, and Cys68 each contribute to the [2Fe-2S] cluster site.

In terms of assembly, heterotrimer composed of a large subunit (NdhL), a medium subunit (NdhM) and a small subunit (NdhS). [2Fe-2S] cluster is required as a cofactor.

It is found in the cytoplasm. The enzyme catalyses (R)-nicotine + A + H2O = (R)-6-hydroxynicotine + AH2. It catalyses the reaction (S)-nicotine + A + H2O = (S)-6-hydroxynicotine + AH2. Its pathway is alkaloid degradation; nicotine degradation; 6-hydroxypseudooxynicotine from nicotine (R-isomer route): step 1/2. The protein operates within alkaloid degradation; nicotine degradation; 6-hydroxypseudooxynicotine from nicotine (S-isomer route): step 1/2. With respect to regulation, nicotine dehydrogenase activity is inhibited by tungsten. In terms of biological role, component of the nicotine 6-hydroxylase, which is involved in the degradation of nicotine. Catalyzes the hydroxylation of the pyridine ring at C6 to form 6-hydroxynicotine. Can use both L-nicotine and D-nicotine. The protein is Nicotine 6-hydroxylase small subunit of Paenarthrobacter nicotinovorans (Arthrobacter nicotinovorans).